The following is a 413-amino-acid chain: Eukaryotic initiation factor 4A-14 (413 aa).

The short motif at 40-68 is the Q motif element; it reads DSFDAMGLQENLLRGIYAYGFEKPSAIQQ. A Helicase ATP-binding domain is found at 71–241; sequence IVPFCKGLDV…RKFMSKPVRI (171 aa). An ATP-binding site is contributed by 84 to 91; that stretch reads AQSGTGKT. The short motif at 189–192 is the DEAD box element; the sequence is DEAD. The Helicase C-terminal domain occupies 252 to 413; it reads GIKQFYVNVD…ELPANVADLL (162 aa).

It belongs to the DEAD box helicase family. eIF4A subfamily. As to quaternary structure, eIF4F is a multi-subunit complex, the composition of which varies with external and internal environmental conditions. It is composed of at least EIF4A, EIF4E and EIF4G.

The catalysed reaction is ATP + H2O = ADP + phosphate + H(+). In terms of biological role, ATP-dependent RNA helicase which is a subunit of the eIF4F complex involved in cap recognition and is required for mRNA binding to ribosome. In the current model of translation initiation, eIF4A unwinds RNA secondary structures in the 5'-UTR of mRNAs which is necessary to allow efficient binding of the small ribosomal subunit, and subsequent scanning for the initiator codon. The protein is Eukaryotic initiation factor 4A-14 of Nicotiana tabacum (Common tobacco).